The sequence spans 352 residues: Ion-translocating oxidoreductase complex subunit D (352 aa).

A run of 4 helical transmembrane segments spans residues 20–40, 42–62, 89–109, and 123–143; these read IMLLVLLAAVPGIAAQLCFFG, GTLVQILLASVSALLAEALVL, IPPLAPWWMVVLGTVFAVIIA, and PAMIGYVVLLISFPVQMTSWL. Thr-187 is modified (FMN phosphoryl threonine). Transmembrane regions (helical) follow at residues 215-235, 242-262, 267-287, 301-321, and 322-342; these read LAGAGWQWVNLAWLAGGVWLL, WHIPLSFLVTLALCATLGWLF, LAAPQIHLLSGATMLGAFFIL, LIFGALAGLLVWLIRSFGGYP, and DGVAFAVLLANITVPLIDYYT.

The protein belongs to the NqrB/RnfD family. As to quaternary structure, the complex is composed of six subunits: RsxA, RsxB, RsxC, RsxD, RsxE and RsxG. The cofactor is FMN.

The protein localises to the cell inner membrane. Its function is as follows. Part of a membrane-bound complex that couples electron transfer with translocation of ions across the membrane. Required to maintain the reduced state of SoxR. In Escherichia coli O7:K1 (strain IAI39 / ExPEC), this protein is Ion-translocating oxidoreductase complex subunit D.